Here is a 547-residue protein sequence, read N- to C-terminus: MPTDLHAWNALLRHHDTLRDAQMRDWFDREGAQRVAQCSLEAAGLYLDYSKNRITPQTMSLLMQLAAEAGVTRRRDAMFAGEHINTTEDRAVLHVALRAPAGAAFKVDGEAVVPAIHQVLARMRDFSARVRSGAWKGATGERITDVINIGIGGSDLGPRMVCRALSHLADADGHAAPRMHFVSNVDGTDLAETLVRLDPQRTLVIVCSKTFTTLETMANARSARAWFVASGVAEQDLAKHFVAVSTNTEAVREFGIDPANMFEFWDWIGGRFSLWSSVGLSITLAVGFDAFSDLLAGGHAMDEHFRTAPLERNMPVILGMLGVWYRNFWNLPTSCMAPYSTSLELFPAFLQQLEMESNGKSVQLDGQRIRTHTSPVVWGTAGTNGQHAYFQQIHQGSQVVPVDFVAPLVPPRRLPGHHAKLLANCFAQAEALMRGRSADELRASGLKDEVRIAHMVFDGNRPSNTLLMEDLTPNVLGALIALYEHRTFVQGVVWRINSFDQWGVELGKILARPIEAELTGTATGQHDASTAALIARARAVLKAGAAS.

Glutamate 356 (proton donor) is an active-site residue. Residues histidine 387 and lysine 508 contribute to the active site.

Belongs to the GPI family.

The protein resides in the cytoplasm. The enzyme catalyses alpha-D-glucose 6-phosphate = beta-D-fructose 6-phosphate. It functions in the pathway carbohydrate biosynthesis; gluconeogenesis. It participates in carbohydrate degradation; glycolysis; D-glyceraldehyde 3-phosphate and glycerone phosphate from D-glucose: step 2/4. In terms of biological role, catalyzes the reversible isomerization of glucose-6-phosphate to fructose-6-phosphate. The chain is Glucose-6-phosphate isomerase from Cupriavidus taiwanensis (strain DSM 17343 / BCRC 17206 / CCUG 44338 / CIP 107171 / LMG 19424 / R1) (Ralstonia taiwanensis (strain LMG 19424)).